The following is a 510-amino-acid chain: D-alanine--D-alanyl carrier protein ligase (510 aa).

157–158 (TS) contributes to the ATP binding site. D202 contacts D-alanine. Position 297–302 (297–302 (NTYGPT)) interacts with ATP. V306 lines the D-alanine pocket. ATP-binding residues include D389 and K498. K498 lines the D-alanine pocket.

It belongs to the ATP-dependent AMP-binding enzyme family. DltA subfamily.

The protein localises to the cytoplasm. It carries out the reaction holo-[D-alanyl-carrier protein] + D-alanine + ATP = D-alanyl-[D-alanyl-carrier protein] + AMP + diphosphate. The protein operates within cell wall biogenesis; lipoteichoic acid biosynthesis. Its function is as follows. Catalyzes the first step in the D-alanylation of lipoteichoic acid (LTA), the activation of D-alanine and its transfer onto the D-alanyl carrier protein (Dcp) DltC. In an ATP-dependent two-step reaction, forms a high energy D-alanyl-AMP intermediate, followed by transfer of the D-alanyl residue as a thiol ester to the phosphopantheinyl prosthetic group of the Dcp. D-alanylation of LTA plays an important role in modulating the properties of the cell wall in Gram-positive bacteria, influencing the net charge of the cell wall. The polypeptide is D-alanine--D-alanyl carrier protein ligase (Listeria monocytogenes serotype 4a (strain HCC23)).